Consider the following 328-residue polypeptide: Malate dehydrogenase (328 aa).

An NAD(+)-binding site is contributed by 11–17 (GAAGQIG). Arg94 and Arg100 together coordinate substrate. NAD(+) contacts are provided by residues Asn107, Gln114, and 131 to 133 (VGN). Residues Asn133 and Arg164 each contribute to the substrate site. Residue His189 is the Proton acceptor of the active site.

It belongs to the LDH/MDH superfamily. MDH type 2 family.

It carries out the reaction (S)-malate + NAD(+) = oxaloacetate + NADH + H(+). Catalyzes the reversible oxidation of malate to oxaloacetate. This is Malate dehydrogenase from Xylella fastidiosa (strain 9a5c).